The primary structure comprises 194 residues: MSRSKKTRRISDIMPARKADKKPALPISNSKKRKPTRYELDVQAREEKKKRKHKGLPTGSRNVITEQKTASAKVKKDPRVGSRKKVPLMVEFVNKPEKGQMIKPVPLEPSNHATKATVSPEVELTQLENNECLNQLLDQLEAGKVLSTQDQQFVDECLDRVHELIIELGIEDDEENNEDLLLRQFETIDINKFK.

The interval M1–G81 is disordered. Composition is skewed to basic and acidic residues over residues R9 to P23 and T36 to E47. Residues G59 to A70 are compositionally biased toward polar residues.

Belongs to the YihI family. As to quaternary structure, interacts with Der.

Functionally, a GTPase-activating protein (GAP) that modifies Der/EngA GTPase function. May play a role in ribosome biogenesis. The sequence is that of Der GTPase-activating protein YihI from Haemophilus ducreyi (strain 35000HP / ATCC 700724).